We begin with the raw amino-acid sequence, 262 residues long: Cutinase 1 (262 aa).

Residue Y61 coordinates poly(ethylene terephthalate). The active-site Nucleophile is the S131. 2 residues coordinate poly(ethylene terephthalate): M132 and W156. Active-site charge relay system residues include D177 and H209. A disulfide bond links C242 and C260.

Belongs to the AB hydrolase superfamily.

The protein resides in the secreted. Its subcellular location is the periplasm. The catalysed reaction is (ethylene terephthalate)(n) + H2O = (ethylene terephthalate)(n-1) + 4-[(2-hydroxyethoxy)carbonyl]benzoate + H(+). It carries out the reaction a butanoate ester + H2O = an aliphatic alcohol + butanoate + H(+). It catalyses the reaction an acetyl ester + H2O = an aliphatic alcohol + acetate + H(+). The enzyme catalyses cutin + H2O = cutin monomers.. Functionally, catalyzes the hydrolysis of cutin, a polyester that forms the structure of plant cuticle. Shows esterase activity towards p-nitrophenol-linked aliphatic esters (pNP-aliphatic esters). Capable of degrading the plastic poly(ethylene terephthalate) (PET), the most abundant polyester plastic in the world. Capable of degrading the bioplastic poly(lactic acid) (PLLA). This chain is Cutinase 1, found in Thermobifida cellulosilytica.